We begin with the raw amino-acid sequence, 170 residues long: Co-chaperone protein HscB homolog (170 aa).

One can recognise a J domain in the interval 5 to 79 (DHFSLFGLPA…RARYLCEQAG (75 aa)).

It belongs to the HscB family. As to quaternary structure, interacts with HscA and stimulates its ATPase activity.

Its function is as follows. Co-chaperone involved in the maturation of iron-sulfur cluster-containing proteins. Seems to help targeting proteins to be folded toward HscA. The sequence is that of Co-chaperone protein HscB homolog from Bordetella parapertussis (strain 12822 / ATCC BAA-587 / NCTC 13253).